The chain runs to 162 residues: NADH-quinone oxidoreductase subunit I 2 (162 aa).

2 4Fe-4S ferredoxin-type domains span residues 52 to 82 (LRRY…IEAG) and 93 to 122 (VRYD…EGPN). Positions 62, 65, 68, 72, 102, 105, 108, and 112 each coordinate [4Fe-4S] cluster.

Belongs to the complex I 23 kDa subunit family. As to quaternary structure, NDH-1 is composed of 14 different subunits. Subunits NuoA, H, J, K, L, M, N constitute the membrane sector of the complex. The cofactor is [4Fe-4S] cluster.

It localises to the cell inner membrane. It catalyses the reaction a quinone + NADH + 5 H(+)(in) = a quinol + NAD(+) + 4 H(+)(out). Functionally, NDH-1 shuttles electrons from NADH, via FMN and iron-sulfur (Fe-S) centers, to quinones in the respiratory chain. The immediate electron acceptor for the enzyme in this species is believed to be ubiquinone. Couples the redox reaction to proton translocation (for every two electrons transferred, four hydrogen ions are translocated across the cytoplasmic membrane), and thus conserves the redox energy in a proton gradient. The polypeptide is NADH-quinone oxidoreductase subunit I 2 (Rhodopseudomonas palustris (strain HaA2)).